The following is a 318-amino-acid chain: Deoxyribose-phosphate aldolase (318 aa).

The Proton donor/acceptor role is filled by Asp155. The Schiff-base intermediate with acetaldehyde role is filled by Lys218. The active-site Proton donor/acceptor is the Lys254.

The protein belongs to the DeoC/FbaB aldolase family. DeoC type 2 subfamily. Interacts with YBX1. Mainly expressed in liver, lung and colon.

It is found in the cytoplasm. It localises to the cytoplasmic granule. The protein resides in the nucleus. It catalyses the reaction 2-deoxy-D-ribose 5-phosphate = D-glyceraldehyde 3-phosphate + acetaldehyde. Its pathway is carbohydrate degradation; 2-deoxy-D-ribose 1-phosphate degradation; D-glyceraldehyde 3-phosphate and acetaldehyde from 2-deoxy-alpha-D-ribose 1-phosphate: step 2/2. In terms of biological role, catalyzes a reversible aldol reaction between acetaldehyde and D-glyceraldehyde 3-phosphate to generate 2-deoxy-D-ribose 5-phosphate. Participates in stress granule (SG) assembly. May allow ATP production from extracellular deoxyinosine in conditions of energy deprivation. This chain is Deoxyribose-phosphate aldolase (DERA), found in Homo sapiens (Human).